Reading from the N-terminus, the 172-residue chain is Nucleoside-triphosphatase THEP1 (172 aa).

ATP contacts are provided by residues glycine 11 to threonine 18 and isoleucine 101 to glycine 108.

This sequence belongs to the THEP1 NTPase family.

The catalysed reaction is a ribonucleoside 5'-triphosphate + H2O = a ribonucleoside 5'-diphosphate + phosphate + H(+). In terms of biological role, has nucleotide phosphatase activity towards ATP, GTP, CTP, TTP and UTP. May hydrolyze nucleoside diphosphates with lower efficiency. In Sulfolobus acidocaldarius (strain ATCC 33909 / DSM 639 / JCM 8929 / NBRC 15157 / NCIMB 11770), this protein is Nucleoside-triphosphatase THEP1.